Here is a 429-residue protein sequence, read N- to C-terminus: Phosphomethylpyrimidine synthase (429 aa).

Substrate-binding positions include N66, M95, Y124, H163, 185–187 (SRG), 226–229 (DGLR), and E265. H269 contacts Zn(2+). Y292 is a substrate binding site. Position 333 (H333) interacts with Zn(2+). [4Fe-4S] cluster contacts are provided by C409, C412, and C416.

This sequence belongs to the ThiC family. [4Fe-4S] cluster is required as a cofactor.

It catalyses the reaction 5-amino-1-(5-phospho-beta-D-ribosyl)imidazole + S-adenosyl-L-methionine = 4-amino-2-methyl-5-(phosphooxymethyl)pyrimidine + CO + 5'-deoxyadenosine + formate + L-methionine + 3 H(+). It participates in cofactor biosynthesis; thiamine diphosphate biosynthesis. Functionally, catalyzes the synthesis of the hydroxymethylpyrimidine phosphate (HMP-P) moiety of thiamine from aminoimidazole ribotide (AIR) in a radical S-adenosyl-L-methionine (SAM)-dependent reaction. The polypeptide is Phosphomethylpyrimidine synthase (Carboxydothermus hydrogenoformans (strain ATCC BAA-161 / DSM 6008 / Z-2901)).